We begin with the raw amino-acid sequence, 291 residues long: Acetyl-coenzyme A carboxylase carboxyl transferase subunit beta (291 aa).

A CoA carboxyltransferase N-terminal domain is found at 23–291 (VYTKDPVSGE…TPASASVAKS (269 aa)).

Belongs to the AccD/PCCB family. In terms of assembly, acetyl-CoA carboxylase is a heterohexamer composed of biotin carboxyl carrier protein (AccB), biotin carboxylase (AccC) and two subunits each of ACCase subunit alpha (AccA) and ACCase subunit beta (AccD).

It is found in the cytoplasm. The enzyme catalyses N(6)-carboxybiotinyl-L-lysyl-[protein] + acetyl-CoA = N(6)-biotinyl-L-lysyl-[protein] + malonyl-CoA. It functions in the pathway lipid metabolism; malonyl-CoA biosynthesis; malonyl-CoA from acetyl-CoA: step 1/1. In terms of biological role, component of the acetyl coenzyme A carboxylase (ACC) complex. Biotin carboxylase (BC) catalyzes the carboxylation of biotin on its carrier protein (BCCP) and then the CO(2) group is transferred by the transcarboxylase to acetyl-CoA to form malonyl-CoA. This is Acetyl-coenzyme A carboxylase carboxyl transferase subunit beta from Opitutus terrae (strain DSM 11246 / JCM 15787 / PB90-1).